The following is a 130-amino-acid chain: Small ribosomal subunit protein uS11 (130 aa).

Belongs to the universal ribosomal protein uS11 family. Part of the 30S ribosomal subunit. Interacts with proteins S7 and S18. Binds to IF-3.

Located on the platform of the 30S subunit, it bridges several disparate RNA helices of the 16S rRNA. Forms part of the Shine-Dalgarno cleft in the 70S ribosome. This chain is Small ribosomal subunit protein uS11, found in Prochlorococcus marinus (strain MIT 9515).